The following is a 380-amino-acid chain: Tubulin-like protein CetZ (380 aa).

GTP contacts are provided by residues 10–14 (QCGTK), 103–105 (GTG), glutamate 136, asparagine 163, and asparagine 181. Positions 359–380 (PSLEATGSDDPEGFAEYREVSR) are disordered.

The protein belongs to the CetZ family.

It is found in the cytoplasm. Involved in cell shape control. This chain is Tubulin-like protein CetZ, found in Thermococcus kodakarensis (strain ATCC BAA-918 / JCM 12380 / KOD1) (Pyrococcus kodakaraensis (strain KOD1)).